The chain runs to 309 residues: tRNA dimethylallyltransferase (309 aa).

Residue 9-16 (GPTAVGKT) coordinates ATP. A substrate-binding site is contributed by 11–16 (TAVGKT). An interaction with substrate tRNA region spans residues 34-37 (DSMQ).

Belongs to the IPP transferase family. Monomer. Requires Mg(2+) as cofactor.

It carries out the reaction adenosine(37) in tRNA + dimethylallyl diphosphate = N(6)-dimethylallyladenosine(37) in tRNA + diphosphate. Its function is as follows. Catalyzes the transfer of a dimethylallyl group onto the adenine at position 37 in tRNAs that read codons beginning with uridine, leading to the formation of N6-(dimethylallyl)adenosine (i(6)A). This Clostridium kluyveri (strain NBRC 12016) protein is tRNA dimethylallyltransferase.